Consider the following 303-residue polypeptide: Glycine--tRNA ligase alpha subunit (303 aa).

This sequence belongs to the class-II aminoacyl-tRNA synthetase family. Tetramer of two alpha and two beta subunits.

Its subcellular location is the cytoplasm. It carries out the reaction tRNA(Gly) + glycine + ATP = glycyl-tRNA(Gly) + AMP + diphosphate. The sequence is that of Glycine--tRNA ligase alpha subunit from Streptococcus equi subsp. zooepidemicus (strain H70).